A 117-amino-acid polypeptide reads, in one-letter code: Large ribosomal subunit protein bL20c (117 aa).

Belongs to the bacterial ribosomal protein bL20 family.

It localises to the plastid. Its subcellular location is the chloroplast. Functionally, binds directly to 23S ribosomal RNA and is necessary for the in vitro assembly process of the 50S ribosomal subunit. It is not involved in the protein synthesizing functions of that subunit. The protein is Large ribosomal subunit protein bL20c of Thalassiosira pseudonana (Marine diatom).